Consider the following 90-residue polypeptide: Trp-8 progonadoliberin (90 aa).

A signal peptide spans 1-24 (MSRHVTVVLLLAVVLLLSSHMSHG). At Gln-25 the chain carries Pyrrolidone carboxylic acid. The residue at position 34 (Gly-34) is a Glycine amide.

Belongs to the GnRH family. In terms of tissue distribution, expressed in forebrain but not in testis, ovary, kidney and liver.

It localises to the secreted. In terms of biological role, stimulates the secretion of gonadotropins. The sequence is that of Trp-8 progonadoliberin from Rana dybowskii (Dybovsky's frog).